The chain runs to 562 residues: Actin-related protein 8 (562 aa).

248–251 serves as a coordination point for ATP; that stretch reads DVGD.

Belongs to the actin family. ARP8 subfamily. As to quaternary structure, component of the chromatin remodeling Ino80 complex. Exists as monomers and dimers, but the dimer is most probably the biologically relevant form required for stable interactions with histones that exploits the twofold symmetry of the nucleosome core.

It is found in the nucleus. Plays an important role in the functional organization of mitotic chromosomes. Exhibits low basal ATPase activity, and unable to polymerize. Functionally, proposed core component of the chromatin remodeling INO80 complex which is involved in transcriptional regulation, DNA replication and probably DNA repair. Strongly prefer nucleosomes and H3-H4 tetramers over H2A-H2B dimers, suggesting it may act as a nucleosome recognition module within the complex. This Aedes aegypti (Yellowfever mosquito) protein is Actin-related protein 8.